A 312-amino-acid polypeptide reads, in one-letter code: tRNA dimethylallyltransferase (312 aa).

Glycine 14–serine 21 lines the ATP pocket. Threonine 16 to serine 21 contacts substrate. 2 interaction with substrate tRNA regions span residues aspartate 39–leucine 42 and glutamine 163–arginine 167.

Belongs to the IPP transferase family. In terms of assembly, monomer. Mg(2+) serves as cofactor.

It catalyses the reaction adenosine(37) in tRNA + dimethylallyl diphosphate = N(6)-dimethylallyladenosine(37) in tRNA + diphosphate. Functionally, catalyzes the transfer of a dimethylallyl group onto the adenine at position 37 in tRNAs that read codons beginning with uridine, leading to the formation of N6-(dimethylallyl)adenosine (i(6)A). The polypeptide is tRNA dimethylallyltransferase (Methylococcus capsulatus (strain ATCC 33009 / NCIMB 11132 / Bath)).